The following is a 215-amino-acid chain: Protein LURP-one-related 4 (215 aa).

The protein belongs to the LOR family.

In terms of biological role, might be related to the phospholipid scramblase and tubby-like superfamily of membrane tethered transcription factors. The chain is Protein LURP-one-related 4 from Arabidopsis thaliana (Mouse-ear cress).